Reading from the N-terminus, the 336-residue chain is F420-dependent glucose-6-phosphate dehydrogenase (336 aa).

Position 39 (aspartate 39) interacts with coenzyme F420-(gamma-Glu)n. Histidine 40 serves as the catalytic Proton donor. Residues threonine 76 and 107 to 108 each bind coenzyme F420-(gamma-Glu)n; that span reads TG. Glutamate 109 (proton acceptor) is an active-site residue. Coenzyme F420-(gamma-Glu)n is bound by residues asparagine 112, 177-178, and 180-181; these read GG and LV. Residues threonine 195, lysine 198, lysine 259, and arginine 283 each coordinate substrate.

It belongs to the F420-dependent glucose-6-phosphate dehydrogenase family. In terms of assembly, homodimer.

The enzyme catalyses oxidized coenzyme F420-(gamma-L-Glu)(n) + D-glucose 6-phosphate + H(+) = 6-phospho-D-glucono-1,5-lactone + reduced coenzyme F420-(gamma-L-Glu)(n). Functionally, catalyzes the coenzyme F420-dependent oxidation of glucose 6-phosphate (G6P) to 6-phosphogluconolactone. The chain is F420-dependent glucose-6-phosphate dehydrogenase from Nocardia farcinica (strain IFM 10152).